Reading from the N-terminus, the 172-residue chain is Methylated-DNA--protein-cysteine methyltransferase (172 aa).

The active-site Nucleophile; methyl group acceptor is the Cys-142.

It belongs to the MGMT family.

Its subcellular location is the cytoplasm. It catalyses the reaction a 6-O-methyl-2'-deoxyguanosine in DNA + L-cysteinyl-[protein] = S-methyl-L-cysteinyl-[protein] + a 2'-deoxyguanosine in DNA. It carries out the reaction a 4-O-methyl-thymidine in DNA + L-cysteinyl-[protein] = a thymidine in DNA + S-methyl-L-cysteinyl-[protein]. In terms of biological role, involved in the cellular defense against the biological effects of O6-methylguanine (O6-MeG) and O4-methylthymine (O4-MeT) in DNA. Repairs the methylated nucleobase in DNA by stoichiometrically transferring the methyl group to a cysteine residue in the enzyme. This is a suicide reaction: the enzyme is irreversibly inactivated. In Pyrococcus horikoshii (strain ATCC 700860 / DSM 12428 / JCM 9974 / NBRC 100139 / OT-3), this protein is Methylated-DNA--protein-cysteine methyltransferase.